The primary structure comprises 312 residues: Olfactory receptor 1493 (312 aa).

Topologically, residues 1-23 are extracellular; the sequence is MNNKTVITHFLLLGLPIPPEHQQ. N3 carries an N-linked (GlcNAc...) asparagine glycan. A helical transmembrane segment spans residues 24–48; the sequence is LFFALFLIMYLTTFLGNLLIVVLVQ. Topologically, residues 49–55 are cytoplasmic; sequence LDSHLHT. The helical transmembrane segment at 56–77 threads the bilayer; that stretch reads PMYLFLSNLSFSDLCFSSVTML. Residues 78–98 are Extracellular-facing; that stretch reads KLLQNIQSQVPSISYAGCLTQ. A disulfide bridge connects residues C95 and C187. A helical membrane pass occupies residues 99-118; that stretch reads IFFFLLFGYLGNFLLVAMAY. Residues 119-137 lie on the Cytoplasmic side of the membrane; it reads DRYVAICFPLHYTNIMSHK. A helical transmembrane segment spans residues 138 to 156; the sequence is LCTCLLLVFWIMTSSHAMM. Topologically, residues 157-194 are extracellular; sequence HTLLAARLSFCENNVLLNFFCDLFVLLKLACSDTYVNE. A helical membrane pass occupies residues 195-217; the sequence is LMIHIMGVIIIVIPFVLIVISYA. Residues 218–234 lie on the Cytoplasmic side of the membrane; it reads KIISSILKVPSTQSIHK. A helical transmembrane segment spans residues 235 to 258; that stretch reads VFSTCGSHLSVVSLFYGTIIGLYL. At 259-270 the chain is on the extracellular side; the sequence is CPSGDNFSLKGS. The chain crosses the membrane as a helical span at residues 271–290; that stretch reads AMAMMYTVVTPMLNPFIYSL. The Cytoplasmic portion of the chain corresponds to 291–312; it reads RNRDMKQALIRVTCSKKISLPW.

Belongs to the G-protein coupled receptor 1 family. Olfactory epithelium.

It is found in the cell membrane. Functionally, odorant receptor. In Rattus norvegicus (Rat), this protein is Olfactory receptor 1493 (Olr1493).